Here is a 288-residue protein sequence, read N- to C-terminus: Coiled-coil domain-containing protein 190 (288 aa).

Residues 16–69 (LERKSARQAEARLSLRLQRLEIICLYHVKSLAREQRQLQKELQRLQQDIIKKRF) adopt a coiled-coil conformation. Residues 141–235 (GERTSCFKEG…SSVDYAGSFK (95 aa)) form a disordered region. The segment covering 177-188 (HDQELSTNKTED) has biased composition (basic and acidic residues). Residues 203–213 (ANETRSENASQ) show a composition bias toward polar residues.

This Mus musculus (Mouse) protein is Coiled-coil domain-containing protein 190 (Ccdc190).